The sequence spans 461 residues: Glyceraldehyde-3-phosphate dehydrogenase-like protein (461 aa).

Threonine 421 is subject to Phosphothreonine.

Belongs to the glyceraldehyde-3-phosphate dehydrogenase family.

This Pseudomonas aeruginosa (strain UCBPP-PA14) protein is Glyceraldehyde-3-phosphate dehydrogenase-like protein (gap2).